Here is a 138-residue protein sequence, read N- to C-terminus: Acidic phospholipase A2 Drk-a1 (138 aa).

The first 16 residues, 1–16, serve as a signal peptide directing secretion; sequence MRTLWIVAVCLIGVEG. Cystine bridges form between cysteine 42/cysteine 131, cysteine 44/cysteine 60, cysteine 59/cysteine 111, cysteine 65/cysteine 138, cysteine 66/cysteine 104, cysteine 73/cysteine 97, and cysteine 91/cysteine 102. 3 residues coordinate Ca(2+): tyrosine 43, glycine 45, and glycine 47. Histidine 63 is an active-site residue. Aspartate 64 is a binding site for Ca(2+). Residue aspartate 105 is part of the active site.

It belongs to the phospholipase A2 family. Group II subfamily. D49 sub-subfamily. The cofactor is Ca(2+). As to expression, expressed by the venom gland.

Its subcellular location is the secreted. It catalyses the reaction a 1,2-diacyl-sn-glycero-3-phosphocholine + H2O = a 1-acyl-sn-glycero-3-phosphocholine + a fatty acid + H(+). Snake venom phospholipase A2 (PLA2) that exhibits high hydrolytic activities and shows strong preference for the anionic micelles (dPPC with deoxycholate) to the zwitterionic micelles (dPPC with Triton X-100). PLA2 catalyzes the calcium-dependent hydrolysis of the 2-acyl groups in 3-sn-phosphoglycerides. In Daboia russelii (Russel's viper), this protein is Acidic phospholipase A2 Drk-a1.